A 508-amino-acid chain; its full sequence is Pyruvate kinase 2 (508 aa).

Position 50 (R50) interacts with substrate. K(+)-binding residues include N52, S54, D85, and T86. 52 to 55 (NFSH) is a binding site for ATP. 2 residues coordinate ATP: R92 and K178. E243 provides a ligand contact to Mg(2+). G266, D267, and T299 together coordinate substrate. Residue D267 participates in Mg(2+) binding.

Belongs to the pyruvate kinase family. Homotetramer. It depends on Mg(2+) as a cofactor. K(+) is required as a cofactor.

It catalyses the reaction pyruvate + ATP = phosphoenolpyruvate + ADP + H(+). The protein operates within carbohydrate degradation; glycolysis; pyruvate from D-glyceraldehyde 3-phosphate: step 5/5. In Candida glabrata (strain ATCC 2001 / BCRC 20586 / JCM 3761 / NBRC 0622 / NRRL Y-65 / CBS 138) (Yeast), this protein is Pyruvate kinase 2 (PYK2).